A 627-amino-acid chain; its full sequence is (-)-beta-pinene synthase 1, chloroplastic (627 aa).

A chloroplast-targeting transit peptide spans 1–50; that stretch reads MDLISVLPSTSKSCVCLHKPLSSSTHKLKPFCRTIRILGMPRPRKSVLMA. Mg(2+)-binding residues include Asp-378, Asp-382, and Asp-530. Residues 378-382 carry the DDXXD motif motif; the sequence is DDMYD.

It belongs to the terpene synthase family. Tpsd subfamily. The cofactor is Mg(2+). Requires Mn(2+) as cofactor.

It localises to the plastid. Its subcellular location is the chloroplast. It catalyses the reaction (2E)-geranyl diphosphate = (1S,5S)-beta-pinene + diphosphate. It carries out the reaction (2E)-geranyl diphosphate = (1S,5S)-alpha-pinene + diphosphate. The protein operates within terpene metabolism; oleoresin biosynthesis. It participates in secondary metabolite biosynthesis; terpenoid biosynthesis. Its function is as follows. Monoterpene synthase (TPS) involved in the biosynthesis of monoterpene natural products included in conifer oleoresin secretions and volatile emissions; these compounds contribute to biotic and abiotic stress defense against herbivores and pathogens. Catalyzes the conversion of (2E)-geranyl diphosphate (GPP) to (-)-beta-pinene and, to a lower extent, to (-)-alpha-pinene. The protein is (-)-beta-pinene synthase 1, chloroplastic of Pinus contorta (Shore pine).